The sequence spans 432 residues: Enolase (432 aa).

(2R)-2-phosphoglycerate is bound at residue Gln-167. Glu-209 serves as the catalytic Proton donor. Residues Asp-246, Glu-291, and Asp-318 each coordinate Mg(2+). Lys-343, Arg-372, Ser-373, and Lys-394 together coordinate (2R)-2-phosphoglycerate. Lys-343 (proton acceptor) is an active-site residue.

It belongs to the enolase family. In terms of assembly, component of the RNA degradosome, a multiprotein complex involved in RNA processing and mRNA degradation. The cofactor is Mg(2+).

The protein localises to the cytoplasm. It localises to the secreted. Its subcellular location is the cell surface. The enzyme catalyses (2R)-2-phosphoglycerate = phosphoenolpyruvate + H2O. It participates in carbohydrate degradation; glycolysis; pyruvate from D-glyceraldehyde 3-phosphate: step 4/5. Catalyzes the reversible conversion of 2-phosphoglycerate (2-PG) into phosphoenolpyruvate (PEP). It is essential for the degradation of carbohydrates via glycolysis. The chain is Enolase from Colwellia psychrerythraea (strain 34H / ATCC BAA-681) (Vibrio psychroerythus).